The primary structure comprises 339 residues: D-erythrose-4-phosphate dehydrogenase (339 aa).

NAD(+)-binding positions include 12–13 (RI) and arginine 81. Residues 154-156 (SCT), arginine 200, 213-214 (TK), and arginine 236 contribute to the substrate site. Residue cysteine 155 is the Nucleophile of the active site. Asparagine 318 is a binding site for NAD(+).

Belongs to the glyceraldehyde-3-phosphate dehydrogenase family. Epd subfamily. Homotetramer.

It localises to the cytoplasm. It carries out the reaction D-erythrose 4-phosphate + NAD(+) + H2O = 4-phospho-D-erythronate + NADH + 2 H(+). It functions in the pathway cofactor biosynthesis; pyridoxine 5'-phosphate biosynthesis; pyridoxine 5'-phosphate from D-erythrose 4-phosphate: step 1/5. Catalyzes the NAD-dependent conversion of D-erythrose 4-phosphate to 4-phosphoerythronate. This Escherichia coli O45:K1 (strain S88 / ExPEC) protein is D-erythrose-4-phosphate dehydrogenase.